We begin with the raw amino-acid sequence, 204 residues long: Thiamine-phosphate synthase (204 aa).

Residues 28–32 and Asn60 contribute to the 4-amino-2-methyl-5-(diphosphooxymethyl)pyrimidine site; that span reads QLRIK. Positions 61 and 80 each coordinate Mg(2+). Positions 99 and 128 each coordinate 4-amino-2-methyl-5-(diphosphooxymethyl)pyrimidine. Residues Gly157 and 177 to 178 each bind 2-[(2R,5Z)-2-carboxy-4-methylthiazol-5(2H)-ylidene]ethyl phosphate; that span reads VT.

The protein belongs to the thiamine-phosphate synthase family. Mg(2+) serves as cofactor.

It carries out the reaction 2-[(2R,5Z)-2-carboxy-4-methylthiazol-5(2H)-ylidene]ethyl phosphate + 4-amino-2-methyl-5-(diphosphooxymethyl)pyrimidine + 2 H(+) = thiamine phosphate + CO2 + diphosphate. The enzyme catalyses 2-(2-carboxy-4-methylthiazol-5-yl)ethyl phosphate + 4-amino-2-methyl-5-(diphosphooxymethyl)pyrimidine + 2 H(+) = thiamine phosphate + CO2 + diphosphate. It catalyses the reaction 4-methyl-5-(2-phosphooxyethyl)-thiazole + 4-amino-2-methyl-5-(diphosphooxymethyl)pyrimidine + H(+) = thiamine phosphate + diphosphate. It participates in cofactor biosynthesis; thiamine diphosphate biosynthesis; thiamine phosphate from 4-amino-2-methyl-5-diphosphomethylpyrimidine and 4-methyl-5-(2-phosphoethyl)-thiazole: step 1/1. In terms of biological role, condenses 4-methyl-5-(beta-hydroxyethyl)thiazole monophosphate (THZ-P) and 2-methyl-4-amino-5-hydroxymethyl pyrimidine pyrophosphate (HMP-PP) to form thiamine monophosphate (TMP). The sequence is that of Thiamine-phosphate synthase from Rhizobium etli (strain ATCC 51251 / DSM 11541 / JCM 21823 / NBRC 15573 / CFN 42).